The primary structure comprises 82 residues: Ice-structuring protein A (82 aa).

A signal peptide spans 1 to 23 (MALSLFTVGQLIFLFWTMRITEA). The propeptide at 24-44 (SPDPAAKAAPAAAAAPAAAAP) is removed by a dipeptidylpeptidase. Arg-81 carries the arginine amide modification.

This sequence belongs to the type-I AFP family. As to expression, detected in liver and in blood serum (at protein level).

It is found in the secreted. In terms of biological role, contributes to protect fish blood from freezing at subzero sea water temperatures. Lowers the blood freezing point. Binds to nascent ice crystals and prevents further growth. The protein is Ice-structuring protein A of Pseudopleuronectes americanus (Winter flounder).